The chain runs to 137 residues: Large ribosomal subunit protein uL16 (137 aa).

It belongs to the universal ribosomal protein uL16 family. As to quaternary structure, part of the 50S ribosomal subunit.

Binds 23S rRNA and is also seen to make contacts with the A and possibly P site tRNAs. The chain is Large ribosomal subunit protein uL16 from Sorangium cellulosum (strain So ce56) (Polyangium cellulosum (strain So ce56)).